A 429-amino-acid chain; its full sequence is Chaperone SurA (429 aa).

Positions 1–19 (MKKTLLALLIASVMQSALA) are cleaved as a signal peptide. PpiC domains are found at residues 172–273 (RTEY…KLVD) and 283–381 (VEQY…LVEG).

The protein localises to the periplasm. It carries out the reaction [protein]-peptidylproline (omega=180) = [protein]-peptidylproline (omega=0). Its function is as follows. Chaperone involved in the correct folding and assembly of outer membrane proteins. Recognizes specific patterns of aromatic residues and the orientation of their side chains, which are found more frequently in integral outer membrane proteins. May act in both early periplasmic and late outer membrane-associated steps of protein maturation. This chain is Chaperone SurA, found in Chromobacterium violaceum (strain ATCC 12472 / DSM 30191 / JCM 1249 / CCUG 213 / NBRC 12614 / NCIMB 9131 / NCTC 9757 / MK).